Reading from the N-terminus, the 429-residue chain is MSEAWITLATNDNYAQGALVLVHSLRTAGTTRKIHCLISNEVSAPVRKQLEEHFDDVSIVDVFNSNDSDNLRLIERPDLGVTFTKLHCWRLTQYTKCVFLDADTLVLRNADELFTRPDFSAASDIGWPDSFNSGVFVYVPNNETYRQLVDFAVTHGSYDGGDQGLLNDFFSNWRDLPSEHRLPFIYNMTAGAFYTYAAAYKRYGANTKIVHFIGSVKPWHGSAAVHTGEHFQQWQKIYHAHVNHTSRTNEHAAVFPSHHHTPEHRSHSADHPKIERKDSIVREIGNFVMHVVQSVNILPSYDTDANTSDSHRNNEPHKHDQQREEHHELPHNKFQTPHEESQDIVGSTDCFGSQMPKYNADSETDREVEQITNNTPCPAFVPFERREEYQAASPSTEERRAAWEAGQPDYLGRDAFVHIQEALNRALNE.

5 residues coordinate UDP: Leu-8, Thr-10, Asn-11, Tyr-14, and Arg-76. UDP-alpha-D-glucose-binding residues include Leu-8, Thr-10, Asn-11, Tyr-14, Arg-76, Lys-85, Asp-101, Ala-102, Asp-103, Asn-132, Ser-133, Asp-159, Asp-162, and Gln-163. Positions 101, 102, and 103 each coordinate UDP. A Mn(2+)-binding site is contributed by Asp-101. Asp-103 contributes to the Mn(2+) binding site. The O-linked (Glc...) tyrosine glycan is linked to Tyr-194. The UDP site is built by His-211, Gly-214, and Lys-217. His-211 serves as a coordination point for Mn(2+). Gly-214 and Lys-217 together coordinate UDP-alpha-D-glucose. Disordered regions lie at residues 254 to 274 (VFPS…HPKI) and 300 to 338 (SYDT…QTPH). Basic and acidic residues-rich tracts occupy residues 263–274 (EHRSHSADHPKI) and 309–338 (DSHR…QTPH).

Belongs to the glycosyltransferase 8 family. Glycogenin subfamily. Forms a heterooctamer with one molecule of gyg-1 bound to each protomer of the gys-1 homotetramer. The N-terminus of gys-1 is involved in interprotomer contacts with gyg-1. The interaction with gys-1 is required for glycogen production but is not required for gys-1 intrinsic activity. Requires Mn(2+) as cofactor. In terms of processing, self-glycosylated by the transfer of glucose residues from UDP-glucose to itself, forming an alpha-1,4-glycan of around 10 residues attached to Tyr-194.

The protein localises to the cytoplasm. It is found in the nucleus. The enzyme catalyses L-tyrosyl-[glycogenin] + UDP-alpha-D-glucose = alpha-D-glucosyl-L-tyrosyl-[glycogenin] + UDP + H(+). The catalysed reaction is [1,4-alpha-D-glucosyl](n)-L-tyrosyl-[glycogenin] + UDP-alpha-D-glucose = [1,4-alpha-D-glucosyl](n+1)-L-tyrosyl-[glycogenin] + UDP + H(+). It functions in the pathway glycan biosynthesis; glycogen biosynthesis. Functionally, self-glucosylating initiator of glycogen synthesis. It catalyzes the formation of a short alpha (1,4)-glucosyl chain covalently attached via a glucose 1-O-tyrosyl linkage to internal tyrosine residues and these chains act as primers for the elongation reaction catalyzed by glycogen synthase. The polypeptide is Glycogenin-1 (Caenorhabditis elegans).